Here is a 251-residue protein sequence, read N- to C-terminus: Geranylgeranylglyceryl phosphate synthase (251 aa).

Positions 25 and 54 each coordinate Mg(2+). Sn-glycerol 1-phosphate is bound by residues 173–179 (YLEAGSG), 204–205 (GG), and 226–227 (GT).

This sequence belongs to the GGGP/HepGP synthase family. Group II subfamily. Mg(2+) is required as a cofactor.

It is found in the cytoplasm. It catalyses the reaction sn-glycerol 1-phosphate + (2E,6E,10E)-geranylgeranyl diphosphate = sn-3-O-(geranylgeranyl)glycerol 1-phosphate + diphosphate. Its pathway is membrane lipid metabolism; glycerophospholipid metabolism. Functionally, prenyltransferase that catalyzes the transfer of the geranylgeranyl moiety of geranylgeranyl diphosphate (GGPP) to the C3 hydroxyl of sn-glycerol-1-phosphate (G1P). This reaction is the first ether-bond-formation step in the biosynthesis of archaeal membrane lipids. In Pyrococcus furiosus (strain ATCC 43587 / DSM 3638 / JCM 8422 / Vc1), this protein is Geranylgeranylglyceryl phosphate synthase.